The sequence spans 109 residues: UPF0060 membrane protein HEAR0108 (109 aa).

Transmembrane regions (helical) follow at residues 7 to 27 (VALF…PYLW), 33 to 53 (SIWL…LLSL), 63 to 83 (AAYG…VDGI), and 87 to 107 (NWDV…MFAP).

The protein belongs to the UPF0060 family.

The protein resides in the cell inner membrane. This Herminiimonas arsenicoxydans protein is UPF0060 membrane protein HEAR0108.